The sequence spans 76 residues: uncharacterized protein (76 aa).

The next 2 helical transmembrane spans lie at 16–33 and 45–61; these read FAFTLLAVSTFLYIGAVL and TMFLADCVFLAGAFFCA.

It is found in the cell membrane. This is an uncharacterized protein from Bacillus subtilis (strain 168).